Reading from the N-terminus, the 465-residue chain is MSHLAISELLKGKVSVDSQVTVKGWIRTRRDSKAGISFLAVHDGSCFDPIQAVVPNSLNNYDEVTSLTAGCSVSVTGVLVQSAGQGQSYEIQANSVTVLGWVENPDSYPMAAKRHSIEYLREHAHLRPRTNMIGAVTRVRNCLAQAIHRFYHEQGFLWISTPIITASDCEGAGEMFRVSTLDMQNLPLTDKGEVDYSEDFFGKEAFLTVSGQLNGETYASAMSKIYTFGPTFRAENSNTSRHLAEFWMVEPELAFADLEDIAKLAEQMLKYVFKAVLEERRDDMEFFAQRVEKTAITRLEEFVEKDFAQVDYTEAVEILKACGKKFEYAVEWGVDLQSEHERYLAEEHFKAPVVIKNYPRDIKAFYMRQNEDGKTVAAMDIVAPGIGEIIGGSQREERLDILDARLDEMGLNKDDYSWYRDLRKYGTVPHSGFGLGFERLVAYVTGMGNVRDVIAFPRTKGSATY.

It belongs to the class-II aminoacyl-tRNA synthetase family. As to quaternary structure, homodimer.

It is found in the cytoplasm. The enzyme catalyses tRNA(Asn) + L-asparagine + ATP = L-asparaginyl-tRNA(Asn) + AMP + diphosphate + H(+). This is Asparagine--tRNA ligase from Pseudoalteromonas translucida (strain TAC 125).